A 364-amino-acid polypeptide reads, in one-letter code: Aminomethyltransferase (364 aa).

Belongs to the GcvT family. As to quaternary structure, the glycine cleavage system is composed of four proteins: P, T, L and H.

The catalysed reaction is N(6)-[(R)-S(8)-aminomethyldihydrolipoyl]-L-lysyl-[protein] + (6S)-5,6,7,8-tetrahydrofolate = N(6)-[(R)-dihydrolipoyl]-L-lysyl-[protein] + (6R)-5,10-methylene-5,6,7,8-tetrahydrofolate + NH4(+). Its function is as follows. The glycine cleavage system catalyzes the degradation of glycine. This is Aminomethyltransferase from Anoxybacillus flavithermus (strain DSM 21510 / WK1).